Here is a 310-residue protein sequence, read N- to C-terminus: Putative methyltransferase mtx subunit H (310 aa).

Belongs to the MtrH family. May be part of a complex composed of 3 subunits; MtxA, MtxH and MtxX.

The chain is Putative methyltransferase mtx subunit H (mtxH) from Methanosarcina acetivorans (strain ATCC 35395 / DSM 2834 / JCM 12185 / C2A).